The following is a 328-amino-acid chain: UPF0421 protein SSP0904 (328 aa).

The next 4 membrane-spanning stretches (helical) occupy residues 26–46 (LFCL…IVTI), 61–81 (LPAT…FGDQ), 84–104 (FAYA…NLHV), and 132–152 (LLTA…ILPP).

It belongs to the UPF0421 family.

The protein localises to the cell membrane. This is UPF0421 protein SSP0904 from Staphylococcus saprophyticus subsp. saprophyticus (strain ATCC 15305 / DSM 20229 / NCIMB 8711 / NCTC 7292 / S-41).